Consider the following 344-residue polypeptide: Phenylalanine--tRNA ligase alpha subunit (344 aa).

Residue glutamate 255 coordinates Mg(2+).

This sequence belongs to the class-II aminoacyl-tRNA synthetase family. Phe-tRNA synthetase alpha subunit type 1 subfamily. Tetramer of two alpha and two beta subunits. Mg(2+) serves as cofactor.

It localises to the cytoplasm. The enzyme catalyses tRNA(Phe) + L-phenylalanine + ATP = L-phenylalanyl-tRNA(Phe) + AMP + diphosphate + H(+). In Cytophaga hutchinsonii (strain ATCC 33406 / DSM 1761 / CIP 103989 / NBRC 15051 / NCIMB 9469 / D465), this protein is Phenylalanine--tRNA ligase alpha subunit.